A 1526-amino-acid chain; its full sequence is DNA topoisomerase 2-alpha (1526 aa).

Residue M1 is modified to N-acetylmethionine. The segment at 1-21 (MELSPLQPVNENMQMNKKKNE) is disordered. S4 bears the Phosphoserine mark. K17 participates in a covalent cross-link: Glycyl lysine isopeptide (Lys-Gly) (interchain with G-Cter in SUMO2). ATP is bound by residues N90, N119, and 147-149 (SSN). Residues K155 and K156 each participate in a glycyl lysine isopeptide (Lys-Gly) (interchain with G-Cter in SUMO2) cross-link. 160 to 167 (GRNGYGAK) is a binding site for ATP. K260 is covalently cross-linked (Glycyl lysine isopeptide (Lys-Gly) (interchain with G-Cter in SUMO2)). Residue T281 is modified to Phosphothreonine. The interaction with DNA stretch occupies residues 341–343 (KKK). A Glycyl lysine isopeptide (Lys-Gly) (interchain with G-Cter in SUMO2) cross-link involves residue K351. Position 375 to 377 (375 to 377 (QTK)) interacts with ATP. Glycyl lysine isopeptide (Lys-Gly) (interchain with G-Cter in SUMO2) cross-links involve residues K385, K396, K415, K417, K424, and K439. One can recognise a Toprim domain in the interval 454–571 (CTLILTEGDS…SLLRHRFLEE (118 aa)). E460 lines the Mg(2+) pocket. Residues K465, K479, and K528 each participate in a glycyl lysine isopeptide (Lys-Gly) (interchain with G-Cter in SUMO2) cross-link. Mg(2+) is bound by residues D540 and D542. Glycyl lysine isopeptide (Lys-Gly) (interchain with G-Cter in SUMO2) cross-links involve residues K583, K598, K613, K621, K624, K631, K638, K654, K661, and K675. Residues 714 to 1166 (IPSMVDGLKP…SPSDLWKEDL (453 aa)) enclose the Topo IIA-type catalytic domain. The active-site O-(5'-phospho-DNA)-tyrosine intermediate is Y804. An interaction with DNA region spans residues 989–998 (KLQTSLTCNS). Residue K1074 forms a Glycyl lysine isopeptide (Lys-Gly) (interchain with G-Cter in SUMO2) linkage. Disordered regions lie at residues 1089 to 1117 (WKEA…AESG) and 1180 to 1217 (EKQD…VIPQ). Residues 1098–1109 (DEEENEESDNEN) are compositionally biased toward acidic residues. A Phosphoserine; by CK1 modification is found at S1105. Residues K1191 and K1199 each participate in a glycyl lysine isopeptide (Lys-Gly) (interchain with G-Cter in SUMO2) cross-link. Position 1208 is a phosphoserine (S1208). A Glycyl lysine isopeptide (Lys-Gly) (interchain with G-Cter in SUMO2) cross-link involves residue K1223. Positions 1233-1526 (KIKSENVEGT…LEESDDDDLF (294 aa)) are disordered. Residue K1235 forms a Glycyl lysine isopeptide (Lys-Gly) (interchain with G-Cter in SUMO1); alternate linkage. Residue K1235 forms a Glycyl lysine isopeptide (Lys-Gly) (interchain with G-Cter in SUMO2); alternate linkage. The residue at position 1242 (T1242) is a Phosphothreonine. K1254 participates in a covalent cross-link: Glycyl lysine isopeptide (Lys-Gly) (interchain with G-Cter in SUMO2). Residues 1255-1265 (QRIEKKQKKEP) are compositionally biased toward basic and acidic residues. Glycyl lysine isopeptide (Lys-Gly) (interchain with G-Cter in SUMO2) cross-links involve residues K1271, K1278, and K1281. Phosphoserine is present on residues S1290, S1292, S1294, and S1297. T1322 is subject to Phosphothreonine. Positions 1325-1344 (LDSDEDFSGSDGKDEDEDFF) are enriched in acidic residues. A phosphoserine mark is found at S1327 and S1332. T1349 is subject to Phosphothreonine. Glycyl lysine isopeptide (Lys-Gly) (interchain with G-Cter in SUMO2) cross-links involve residues K1358, K1362, and K1368. Phosphoserine is present on residues S1369 and S1372. Residue K1380 forms a Glycyl lysine isopeptide (Lys-Gly) (interchain with G-Cter in SUMO2) linkage. A phosphoserine mark is found at S1382 and S1386. Residues 1405 to 1426 (SKQTVAVKKTATKSQSSTSTAG) are compositionally biased toward low complexity. Residue K1417 forms a Glycyl lysine isopeptide (Lys-Gly) (interchain with G-Cter in SUMO2); alternate linkage. An N6-acetyllysine; alternate modification is found at K1417. Residues 1428–1434 (KKRAVPK) are interaction with PLSCR1. K1437 is covalently cross-linked (Glycyl lysine isopeptide (Lys-Gly) (interchain with G-Cter in SUMO2); alternate). K1437 bears the N6-acetyllysine; alternate mark. Glycyl lysine isopeptide (Lys-Gly) (interchain with G-Cter in SUMO2) cross-links involve residues K1449 and K1454. A phosphoserine mark is found at S1464, S1466, S1469, and S1471. Residues K1479 and K1487 each participate in a glycyl lysine isopeptide (Lys-Gly) (interchain with G-Cter in SUMO2) cross-link. A compositionally biased stretch (basic and acidic residues) spans 1486-1497 (SKGENQDFRVDL). Phosphoserine is present on S1520.

It belongs to the type II topoisomerase family. Homodimer. Interacts with COPS5. Interacts with RECQL5; this stimulates DNA decatenation. Interacts with SETMAR; stimulates the topoisomerase activity. Interacts with DHX9; this interaction occurs in a E2 enzyme UBE2I- and RNA-dependent manner, negatively regulates DHX9-mediated double-stranded DNA and RNA duplex helicase activity and stimulates TOP2A-mediated supercoiled DNA relaxation activity. Interacts with HNRNPU (via C-terminus); this interaction protects the topoisomerase TOP2A from degradation and positively regulates the relaxation of supercoiled DNA in a RNA-dependent manner. Interacts with MCM3AP. Interacts with ERCC6. Interacts with PLSCR1. Interacts with GCNA; this interaction allows the resolution of topoisomerase II (TOP2A) DNA-protein cross-links. Interacts with POL1RA/RPA1 (via dock II) and UBTF in the context of Pol I complex; may assist Pol I transcription initiation by releasing supercoils occurring during DNA unwinding. Interacts with TPRN; TPRN interacts with a number of DNA damage response proteins, is recruited to sites of DNA damage and may play a role in DNA damage repair. Requires Mg(2+) as cofactor. Mn(2+) is required as a cofactor. Ca(2+) serves as cofactor. Phosphorylation has no effect on catalytic activity. However, phosphorylation at Ser-1105 by CSNK1D/CK1 promotes DNA cleavable complex formation.

The protein resides in the cytoplasm. Its subcellular location is the nucleus. The protein localises to the nucleoplasm. It localises to the nucleolus. The catalysed reaction is ATP-dependent breakage, passage and rejoining of double-stranded DNA.. Key decatenating enzyme that alters DNA topology by binding to two double-stranded DNA molecules, generating a double-stranded break in one of the strands, passing the intact strand through the broken strand, and religating the broken strand. May play a role in regulating the period length of BMAL1 transcriptional oscillation. The chain is DNA topoisomerase 2-alpha (TOP2A) from Cricetulus griseus (Chinese hamster).